An 813-amino-acid polypeptide reads, in one-letter code: LPS-assembly protein LptD (813 aa).

Positions 1-29 (MTEQRRSPNNRALPSPAPTSVPARARRAG) are disordered. A signal peptide spans 1–52 (MTEQRRSPNNRALPSPAPTSVPARARRAGGLHAGALRPLVLAMASLSAGAHA).

This sequence belongs to the LptD family. Component of the lipopolysaccharide transport and assembly complex. Interacts with LptE and LptA.

The protein resides in the cell outer membrane. Together with LptE, is involved in the assembly of lipopolysaccharide (LPS) at the surface of the outer membrane. The chain is LPS-assembly protein LptD from Cupriavidus necator (strain ATCC 17699 / DSM 428 / KCTC 22496 / NCIMB 10442 / H16 / Stanier 337) (Ralstonia eutropha).